Here is a 285-residue protein sequence, read N- to C-terminus: Methyltransferase grgD (285 aa).

Belongs to the methyltransferase superfamily. LaeA methyltransferase family.

It functions in the pathway secondary metabolite biosynthesis. Functionally, methyltransferase; part of the gene cluster that mediates the biosynthesis of gregatin A, a fungal polyketide featuring an alkylated furanone core. The PKS grgA synthesizes C11 and C4 polyketide chains in the presence and absence of the trans-enoyl reductase grgB, respectively. The polyketide transferase grgF is then responsible for the fusion of the two carbon chains to produce the furanone skeleton of gregatin A. Next, the cytochrome P450 monooxygenase grgG accepts performs the oxidative cyclization to furnish the gregatin scaffold and leads to the formation of desmethylgregatin A. Finally, the O-methyltransferase grgD methylates the carboxyl group of desmethylgregatin A to provide gregatin A. The polypeptide is Methyltransferase grgD (Penicillium sp).